The following is an 861-amino-acid chain: Leucine--tRNA ligase (861 aa).

A 'HIGH' region motif is present at residues 42 to 52 (PYPSGRLHMGH). Residues 619–623 (KMSKS) carry the 'KMSKS' region motif. ATP is bound at residue lysine 622.

It belongs to the class-I aminoacyl-tRNA synthetase family.

It localises to the cytoplasm. It catalyses the reaction tRNA(Leu) + L-leucine + ATP = L-leucyl-tRNA(Leu) + AMP + diphosphate. This chain is Leucine--tRNA ligase, found in Haemophilus influenzae (strain ATCC 51907 / DSM 11121 / KW20 / Rd).